The chain runs to 356 residues: 16-methoxy-2,3-dihydro-3-hydroxytabersonine synthase (356 aa).

Residues Cys-49, His-71, Cys-102, Cys-105, Cys-108, Cys-116, and Cys-162 each coordinate Zn(2+). 187–192 (GLGAVG) serves as a coordination point for NAD(+).

It belongs to the zinc-containing alcohol dehydrogenase family. Zn(2+) serves as cofactor. Expressed in leaf epidermis.

It carries out the reaction (3R)-3-hydroxy-16-methoxy-2,3-dihydrotabersonine + A = (3R)-1,2-didehydro-3-hydroxy-16-methoxy-2,3-dihydrotabersonine + AH2. The catalysed reaction is (3R)-3-hydroxy-2,3-dihydrotabersonine + A = (3R)-1,2-didehydro-3-hydroxy-2,3-dihydrotabersonine + AH2. Its pathway is alkaloid biosynthesis; vindoline biosynthesis. Its function is as follows. Converts the unstable imine alcohols produced by CYP71D1V2/T3O into 3-hydroxy-16-methoxy-2,3-dihydrotabersonine or 3-hydroxy-2,3-dihydrotabersonine. The sequence is that of 16-methoxy-2,3-dihydro-3-hydroxytabersonine synthase from Catharanthus roseus (Madagascar periwinkle).